A 999-amino-acid polypeptide reads, in one-letter code: Sarcoplasmic/endoplasmic reticulum calcium ATPase 3 (999 aa).

The residue at position 1 (Met1) is an N-acetylmethionine. At 1–48 the chain is on the cytoplasmic side; that stretch reads MEEAHLLPAADVLRRFSVTAEGGLSPAQVTRARERYGPNELPTEEGKS. Phosphoserine is present on Ser17. Thr19 is modified (phosphothreonine). Residue Ser25 is modified to Phosphoserine. The helical transmembrane segment at 49 to 69 threads the bilayer; that stretch reads LWELVLEQFEDLLVRILLLAA. The Extracellular segment spans residues 70 to 89; sequence LVSFVLACFEEGEETTTAFV. A helical transmembrane segment spans residues 90 to 110; that stretch reads EPLVIVLILVANAVVGVWQER. Residues 111–253 lie on the Cytoplasmic side of the membrane; that stretch reads NAENAIEALK…PERTPLQQKL (143 aa). A helical membrane pass occupies residues 254–273; it reads DEFGRQLSRAISVICMAVWV. Over 274-295 the chain is Extracellular; the sequence is INIGHFADPAHGGSWLRGAVYY. A helical membrane pass occupies residues 296–313; that stretch reads FKIAVALAVAAIPEGLPA. Residues Val304, Ala305, Ile307, and Glu309 each contribute to the Ca(2+) site. Residues 314 to 757 are Cytoplasmic-facing; the sequence is VITTCLALGT…EEGRAIYSNM (444 aa). Residue Asp351 is the 4-aspartylphosphate intermediate of the active site. Residues Asp351 and Thr353 each coordinate Mg(2+). Thr353 serves as a coordination point for ATP. Residues 370–400 form an interaction with phospholamban 1 region; the sequence is AEAEAGTCRLHEFTISGTTYAPEGEVRQGEQ. Thr415 is modified (phosphothreonine). The ATP site is built by Glu442, Arg489, Lys515, Arg560, Thr625, Gly626, and Asp627. Position 662 is a phosphoserine (Ser662). 2 residues coordinate ATP: Arg678 and Lys684. A Mg(2+)-binding site is contributed by Asp703. Residue Asn706 coordinates ATP. The helical transmembrane segment at 758-777 threads the bilayer; that stretch reads KQFIRYLISSNVGEVVCIFL. Residues Asn768 and Glu771 each coordinate Ca(2+). At 778 to 787 the chain is on the extracellular side; that stretch reads TAILGLPEAL. A helical membrane pass occupies residues 788–808; sequence IPVQLLWVNLVTDGLPATALG. Positions 788-808 are interaction with phospholamban 2; it reads IPVQLLWVNLVTDGLPATALG. The Ca(2+) site is built by Asn796, Thr799, and Asp800. Residues 809 to 828 are Cytoplasmic-facing; it reads FNPPDLDIMEKRPRNPREAL. A helical transmembrane segment spans residues 829–851; sequence ISGWLFFRYLAIGVYVGLATVAA. Residues 852 to 897 are Extracellular-facing; sequence ATWWFLYDAEGPQVTFYQLRNFLKCSEDNPLFTGTDCEVFESRFPT. Cys876 and Cys888 form a disulfide bridge. The chain crosses the membrane as a helical span at residues 898 to 917; the sequence is TMALSVLVTTEMCNALNSVS. Glu908 lines the Ca(2+) pocket. At 918–930 the chain is on the cytoplasmic side; it reads ENQSLLRMPPWLN. A helical transmembrane segment spans residues 931–949; the sequence is PWLLAAVAMSMALHFLILL. At 950 to 964 the chain is on the extracellular side; it reads VPPLPLIFQVTPLSG. A helical transmembrane segment spans residues 965-985; it reads RQWVVVLQISLPVILLDEALK. At 986–999 the chain is on the cytoplasmic side; it reads YLSRKHVDEEKGRQ.

This sequence belongs to the cation transport ATPase (P-type) (TC 3.A.3) family. Type IIA subfamily. As to quaternary structure, interacts with sarcolipin (SLN). Interacts with phospholamban (PLN). Interacts with myoregulin (MRLN). Interacts with DWORF. Interacts with VMP1. Interacts with TUNAR; the interaction occurs at low levels in low glucose conditions and is increased by high glucose levels. Mg(2+) serves as cofactor. In terms of tissue distribution, expressed in endothelial tissues.

It is found in the endoplasmic reticulum membrane. It localises to the sarcoplasmic reticulum membrane. It carries out the reaction Ca(2+)(in) + ATP + H2O = Ca(2+)(out) + ADP + phosphate + H(+). With respect to regulation, inhibited by sarcolipin (SLN), phospholamban (PLN) and myoregulin (MRLN). Enhanced by DWORF; DWORF increases activity by displacing sarcolipin (SLN), phospholamban (PLN) and myoregulin (MRLN). In terms of biological role, this magnesium-dependent enzyme catalyzes the hydrolysis of ATP coupled with the transport of calcium. Transports calcium ions from the cytosol into the sarcoplasmic/endoplasmic reticulum lumen. Contributes to calcium sequestration involved in muscular excitation/contraction. This Sus scrofa (Pig) protein is Sarcoplasmic/endoplasmic reticulum calcium ATPase 3 (ATP2A3).